The sequence spans 554 residues: ATP-dependent RNA helicase MRH4, mitochondrial (554 aa).

The N-terminal 54 residues, 1-54 (MSSVGIASASLWLRGPVKSALKGRWLSCEQMRRYGTKSAPAVRKGGHSKKARQA), are a transit peptide targeting the mitochondrion. A Q motif motif is present at residues 119-140 (DCGLDDKRVAAFLGQVQPTPIQ). The region spanning 150–337 (TLMEPQLQVH…NKLFPNLQVV (188 aa)) is the Helicase ATP-binding domain. An ATP-binding site is contributed by 163–170 (AETGSGKT). The DEAD box motif lies at 285-288 (DEAD). Residues 368-554 (ALAQALYAIM…PVVKKNRPIQ (187 aa)) form the Helicase C-terminal domain. A disordered region spans residues 439-474 (RIQDQVRPSELKKPQERRLPNSNIKVADSKDNGQRS). Over residues 445–457 (RPSELKKPQERRL) the composition is skewed to basic and acidic residues.

The protein belongs to the DEAD box helicase family. MRH4 subfamily.

It localises to the mitochondrion. The catalysed reaction is ATP + H2O = ADP + phosphate + H(+). Functionally, ATP-binding RNA helicase involved in mitochondrial RNA metabolism. Required for maintenance of mitochondrial DNA. This chain is ATP-dependent RNA helicase MRH4, mitochondrial (MRH4), found in Eremothecium gossypii (strain ATCC 10895 / CBS 109.51 / FGSC 9923 / NRRL Y-1056) (Yeast).